The primary structure comprises 378 residues: Beta sliding clamp (378 aa).

Belongs to the beta sliding clamp family. As to quaternary structure, forms a ring-shaped head-to-tail homodimer around DNA which binds and tethers DNA polymerases and other proteins to the DNA. The DNA replisome complex has a single clamp-loading complex (3 tau and 1 each of delta, delta', psi and chi subunits) which binds 3 Pol III cores (1 core on the leading strand and 2 on the lagging strand) each with a beta sliding clamp dimer. Additional proteins in the replisome are other copies of gamma, psi and chi, Ssb, DNA helicase and RNA primase.

It localises to the cytoplasm. Functionally, confers DNA tethering and processivity to DNA polymerases and other proteins. Acts as a clamp, forming a ring around DNA (a reaction catalyzed by the clamp-loading complex) which diffuses in an ATP-independent manner freely and bidirectionally along dsDNA. Initially characterized for its ability to contact the catalytic subunit of DNA polymerase III (Pol III), a complex, multichain enzyme responsible for most of the replicative synthesis in bacteria; Pol III exhibits 3'-5' exonuclease proofreading activity. The beta chain is required for initiation of replication as well as for processivity of DNA replication. In Streptococcus pneumoniae (strain ATCC BAA-255 / R6), this protein is Beta sliding clamp (dnaN).